The chain runs to 292 residues: NAD kinase (292 aa).

The active-site Proton acceptor is the D73. Residues 73-74 (DG), 147-148 (NE), H158, R175, D177, 188-193 (TAYSLS), and Q247 each bind NAD(+).

Belongs to the NAD kinase family. A divalent metal cation serves as cofactor.

It localises to the cytoplasm. The catalysed reaction is NAD(+) + ATP = ADP + NADP(+) + H(+). In terms of biological role, involved in the regulation of the intracellular balance of NAD and NADP, and is a key enzyme in the biosynthesis of NADP. Catalyzes specifically the phosphorylation on 2'-hydroxyl of the adenosine moiety of NAD to yield NADP. This Escherichia coli O7:K1 (strain IAI39 / ExPEC) protein is NAD kinase.